Consider the following 106-residue polypeptide: Testis-specific basic protein Y 2 (106 aa).

Belongs to the VCX/VCY family. Interacts with MAP1S. Interacts with UBE3A (via HECT domain). In terms of tissue distribution, expressed exclusively in testis. Expressed in ejaculated spermatozoa of germ cell. Expressed in the nuclei of spermatogonia, spermatocytes, and round spermatids, except elongated spermatids (at protein level).

This chain is Testis-specific basic protein Y 2 (BPY2), found in Homo sapiens (Human).